We begin with the raw amino-acid sequence, 152 residues long: Snaclec lebecin subunit alpha (152 aa).

A signal peptide spans 1 to 23 (MGRSISVSFGLLVVFLSLSGTGA). 3 cysteine pairs are disulfide-bonded: Cys27–Cys38, Cys54–Cys147, and Cys122–Cys139. Positions 34–148 (YEGGCYYVFD…CELAYHFICS (115 aa)) constitute a C-type lectin domain.

In terms of assembly, heterodimer with the beta subunit (AC W5XCJ6); disulfide-linked. As to expression, expressed by the venom gland.

It is found in the secreted. Its function is as follows. Inhibits human breast cancer cells (MDA-MB231) migration and proliferation, as well as their adhesion to fibrinogen and fibronectin. This inhibition may be due to the binding to receptors of the integrin family, probably alpha-v/beta-3 (ITGAV/ITGB3) (40% inhibition of cell adhesion) and alpha-5/beta-1 (ITGA5/ITGB1) (by comparison with lebectin). In Macrovipera lebetinus (Levantine viper), this protein is Snaclec lebecin subunit alpha.